The primary structure comprises 311 residues: Methionyl-tRNA formyltransferase (311 aa).

110–113 (SLLP) serves as a coordination point for (6S)-5,6,7,8-tetrahydrofolate.

It belongs to the Fmt family.

It carries out the reaction L-methionyl-tRNA(fMet) + (6R)-10-formyltetrahydrofolate = N-formyl-L-methionyl-tRNA(fMet) + (6S)-5,6,7,8-tetrahydrofolate + H(+). In terms of biological role, attaches a formyl group to the free amino group of methionyl-tRNA(fMet). The formyl group appears to play a dual role in the initiator identity of N-formylmethionyl-tRNA by promoting its recognition by IF2 and preventing the misappropriation of this tRNA by the elongation apparatus. This chain is Methionyl-tRNA formyltransferase, found in Streptococcus gordonii (strain Challis / ATCC 35105 / BCRC 15272 / CH1 / DL1 / V288).